A 376-amino-acid polypeptide reads, in one-letter code: Alcohol dehydrogenase class-3 (376 aa).

Zn(2+)-binding residues include Cys-40, His-62, Cys-92, Cys-95, Cys-98, Cys-106, and Cys-170.

This sequence belongs to the zinc-containing alcohol dehydrogenase family. Class-III subfamily. As to quaternary structure, homodimer. The cofactor is Zn(2+).

It localises to the cytoplasm. The catalysed reaction is a primary alcohol + NAD(+) = an aldehyde + NADH + H(+). The enzyme catalyses a secondary alcohol + NAD(+) = a ketone + NADH + H(+). It catalyses the reaction S-(hydroxymethyl)glutathione + NADP(+) = S-formylglutathione + NADPH + H(+). It carries out the reaction S-(hydroxymethyl)glutathione + NAD(+) = S-formylglutathione + NADH + H(+). Its function is as follows. Oxidizes long-chain aliphatic alcohols, long-chain hydroxylated fatty acids and S-hydroxymethylglutathione (hmGSH) in increasing order of preference. Shows little or no activity with short-chain aliphatic alcohols. The polypeptide is Alcohol dehydrogenase class-3 (adhI) (Cereibacter sphaeroides (strain ATCC 17023 / DSM 158 / JCM 6121 / CCUG 31486 / LMG 2827 / NBRC 12203 / NCIMB 8253 / ATH 2.4.1.) (Rhodobacter sphaeroides)).